Here is a 162-residue protein sequence, read N- to C-terminus: Zinc finger protein 593 homolog (162 aa).

The C2H2-type zinc-finger motif lies at 59 to 83 (FYCVHCAKYFIDDTAMQAHFRTKVH). The tract at residues 110 to 162 (VKPKKRAMETQPSKEDVVAGKRIRVEVVPEDTDATDSPSTSKTKRKKVEKMET) is disordered. Basic and acidic residues predominate over residues 115–136 (RAMETQPSKEDVVAGKRIRVEV). Positions 151–162 (KTKRKKVEKMET) are enriched in basic residues.

The protein belongs to the ZNF593/BUD20 C2H2-type zinc-finger protein family. In terms of assembly, associates with pre-60S ribosomal particles; released from the pre-60S particle very early in the cytoplasm.

It is found in the nucleus. It localises to the cytoplasm. In terms of biological role, involved in pre-60S ribosomal particles maturation by promoting the nuclear export of the 60S ribosome. The chain is Zinc finger protein 593 homolog from Drosophila melanogaster (Fruit fly).